Consider the following 550-residue polypeptide: Hydroxylamine reductase (550 aa).

[2Fe-2S] cluster is bound by residues Cys-3, Cys-6, Cys-18, and Cys-25. Hybrid [4Fe-2O-2S] cluster contacts are provided by His-249, Glu-273, Cys-317, Cys-405, Cys-433, Cys-458, Glu-492, and Lys-494. Cys-405 bears the Cysteine persulfide mark.

Belongs to the HCP family. [2Fe-2S] cluster is required as a cofactor. Hybrid [4Fe-2O-2S] cluster serves as cofactor.

It is found in the cytoplasm. The enzyme catalyses A + NH4(+) + H2O = hydroxylamine + AH2 + H(+). Catalyzes the reduction of hydroxylamine to form NH(3) and H(2)O. This is Hydroxylamine reductase from Escherichia coli O6:K15:H31 (strain 536 / UPEC).